The following is a 192-amino-acid chain: MAQMYFYYSAMNAGKSTTLLQSSFNYQERGMTPVIFTAALDDRYGVGKVSSRIGLQSDAHLFRPDTNLYQEIAALHEVEKRHCILIDECQFLSKEQVYQLTEVVDKLHIPVLCYGLRTDFLGELFEGSKYLLSWADKLVELKTICHCGRKANMVIRTDEHGVAIKEGDQVAIGGNDRYVSVCRQHYKEALGK.

Residues 9–16 (SAMNAGKS) and 87–90 (DECQ) each bind ATP. Glu-88 (proton acceptor) is an active-site residue. Residues Cys-145, Cys-147, Cys-182, and His-185 each contribute to the Zn(2+) site.

It belongs to the thymidine kinase family. Homotetramer.

It localises to the cytoplasm. The catalysed reaction is thymidine + ATP = dTMP + ADP + H(+). The protein is Thymidine kinase of Vibrio parahaemolyticus serotype O3:K6 (strain RIMD 2210633).